Here is a 193-residue protein sequence, read N- to C-terminus: NADH-quinone oxidoreductase subunit B (193 aa).

Cys-72, Cys-73, Cys-137, and Cys-167 together coordinate [4Fe-4S] cluster.

This sequence belongs to the complex I 20 kDa subunit family. NDH-1 is composed of 14 different subunits. Subunits NuoB, C, D, E, F, and G constitute the peripheral sector of the complex. [4Fe-4S] cluster is required as a cofactor.

Its subcellular location is the cell inner membrane. The catalysed reaction is a quinone + NADH + 5 H(+)(in) = a quinol + NAD(+) + 4 H(+)(out). Functionally, NDH-1 shuttles electrons from NADH, via FMN and iron-sulfur (Fe-S) centers, to quinones in the respiratory chain. The immediate electron acceptor for the enzyme in this species is believed to be ubiquinone. Couples the redox reaction to proton translocation (for every two electrons transferred, four hydrogen ions are translocated across the cytoplasmic membrane), and thus conserves the redox energy in a proton gradient. In Caulobacter vibrioides (strain ATCC 19089 / CIP 103742 / CB 15) (Caulobacter crescentus), this protein is NADH-quinone oxidoreductase subunit B.